The chain runs to 158 residues: C-type lectin lectoxin-Enh5 (158 aa).

Residues 1 to 23 form the signal peptide; it reads MGQFTVVSLGLLAVFLSLSGAKG. Disulfide bonds link Cys26-Cys37, Cys54-Cys154, and Cys129-Cys146. Residues 33 to 155 form the C-type lectin domain; it reads RNGVCNKLFP…CASLHPFICQ (123 aa). The short motif at 119–121 is the Mannose-binding element; sequence EPN. Residues Glu127, Asn142, and Asp143 each contribute to the Ca(2+) site.

This sequence belongs to the true venom lectin family. In terms of tissue distribution, expressed by the venom gland.

It localises to the secreted. Functionally, mannose-binding lectin which recognizes specific carbohydrate structures and agglutinates a variety of animal cells by binding to cell-surface glycoproteins and glycolipids. May be a calcium-dependent lectin. This chain is C-type lectin lectoxin-Enh5, found in Pseudoferania polylepis (Macleay's water snake).